Reading from the N-terminus, the 253-residue chain is Ubiquinone biosynthesis O-methyltransferase (253 aa).

Positions 47, 78, 99, and 141 each coordinate S-adenosyl-L-methionine.

It belongs to the methyltransferase superfamily. UbiG/COQ3 family.

It carries out the reaction a 3-demethylubiquinol + S-adenosyl-L-methionine = a ubiquinol + S-adenosyl-L-homocysteine + H(+). The enzyme catalyses a 3-(all-trans-polyprenyl)benzene-1,2-diol + S-adenosyl-L-methionine = a 2-methoxy-6-(all-trans-polyprenyl)phenol + S-adenosyl-L-homocysteine + H(+). It functions in the pathway cofactor biosynthesis; ubiquinone biosynthesis. In terms of biological role, O-methyltransferase that catalyzes the 2 O-methylation steps in the ubiquinone biosynthetic pathway. The sequence is that of Ubiquinone biosynthesis O-methyltransferase from Rhodopseudomonas palustris (strain HaA2).